We begin with the raw amino-acid sequence, 822 residues long: Valine--tRNA ligase (822 aa).

A 'HIGH' region motif is present at residues 41–51; it reads PNVTGQLHLGH. Residues 511–515 carry the 'KMSKS' region motif; that stretch reads KMSKS. ATP is bound at residue K514. Residues 765 to 822 adopt a coiled-coil conformation; sequence EQKGRELKEIQFLKSEILRAEKILTNKGFLEKAPREKIDLERTKLEKLKEKLAFYEKK.

The protein belongs to the class-I aminoacyl-tRNA synthetase family. ValS type 1 subfamily. Monomer.

Its subcellular location is the cytoplasm. It catalyses the reaction tRNA(Val) + L-valine + ATP = L-valyl-tRNA(Val) + AMP + diphosphate. Catalyzes the attachment of valine to tRNA(Val). As ValRS can inadvertently accommodate and process structurally similar amino acids such as threonine, to avoid such errors, it has a 'posttransfer' editing activity that hydrolyzes mischarged Thr-tRNA(Val) in a tRNA-dependent manner. This is Valine--tRNA ligase from Mesomycoplasma hyopneumoniae (strain 232) (Mycoplasma hyopneumoniae).